The sequence spans 481 residues: Glutamyl-tRNA(Gln) amidotransferase subunit A (481 aa).

Active-site charge relay system residues include K76 and S151. S175 serves as the catalytic Acyl-ester intermediate.

Belongs to the amidase family. GatA subfamily. Heterotrimer of A, B and C subunits.

It catalyses the reaction L-glutamyl-tRNA(Gln) + L-glutamine + ATP + H2O = L-glutaminyl-tRNA(Gln) + L-glutamate + ADP + phosphate + H(+). Functionally, allows the formation of correctly charged Gln-tRNA(Gln) through the transamidation of misacylated Glu-tRNA(Gln) in organisms which lack glutaminyl-tRNA synthetase. The reaction takes place in the presence of glutamine and ATP through an activated gamma-phospho-Glu-tRNA(Gln). The polypeptide is Glutamyl-tRNA(Gln) amidotransferase subunit A (Neisseria meningitidis serogroup C / serotype 2a (strain ATCC 700532 / DSM 15464 / FAM18)).